A 332-amino-acid chain; its full sequence is Lipoyl synthase (332 aa).

7 residues coordinate [4Fe-4S] cluster: cysteine 74, cysteine 79, cysteine 85, cysteine 100, cysteine 104, cysteine 107, and serine 314. The 219-residue stretch at 85 to 303 (CFGKGTATFM…EEEAYKMGFT (219 aa)) folds into the Radical SAM core domain.

Belongs to the radical SAM superfamily. Lipoyl synthase family. The cofactor is [4Fe-4S] cluster.

Its subcellular location is the cytoplasm. It catalyses the reaction [[Fe-S] cluster scaffold protein carrying a second [4Fe-4S](2+) cluster] + N(6)-octanoyl-L-lysyl-[protein] + 2 oxidized [2Fe-2S]-[ferredoxin] + 2 S-adenosyl-L-methionine + 4 H(+) = [[Fe-S] cluster scaffold protein] + N(6)-[(R)-dihydrolipoyl]-L-lysyl-[protein] + 4 Fe(3+) + 2 hydrogen sulfide + 2 5'-deoxyadenosine + 2 L-methionine + 2 reduced [2Fe-2S]-[ferredoxin]. The protein operates within protein modification; protein lipoylation via endogenous pathway; protein N(6)-(lipoyl)lysine from octanoyl-[acyl-carrier-protein]: step 2/2. Catalyzes the radical-mediated insertion of two sulfur atoms into the C-6 and C-8 positions of the octanoyl moiety bound to the lipoyl domains of lipoate-dependent enzymes, thereby converting the octanoylated domains into lipoylated derivatives. The sequence is that of Lipoyl synthase from Paracidovorax citrulli (strain AAC00-1) (Acidovorax citrulli).